A 539-amino-acid chain; its full sequence is Chaperonin GroEL (539 aa).

ATP-binding positions include 29–32 (TLGP), 86–90 (DGTTT), Gly-413, and Asp-492.

The protein belongs to the chaperonin (HSP60) family. As to quaternary structure, forms a cylinder of 14 subunits composed of two heptameric rings stacked back-to-back. Interacts with the co-chaperonin GroES.

It is found in the cytoplasm. It carries out the reaction ATP + H2O + a folded polypeptide = ADP + phosphate + an unfolded polypeptide.. Together with its co-chaperonin GroES, plays an essential role in assisting protein folding. The GroEL-GroES system forms a nano-cage that allows encapsulation of the non-native substrate proteins and provides a physical environment optimized to promote and accelerate protein folding. This is Chaperonin GroEL from Fusobacterium nucleatum subsp. nucleatum (strain ATCC 25586 / DSM 15643 / BCRC 10681 / CIP 101130 / JCM 8532 / KCTC 2640 / LMG 13131 / VPI 4355).